A 199-amino-acid polypeptide reads, in one-letter code: Holliday junction branch migration complex subunit RuvA (199 aa).

The interval 1-63 (MIDYIKGNLV…EDSQRLFGFT (63 aa)) is domain I. A domain II region spans residues 64-142 (TRTERLLFEK…DMAPMLEPAA (79 aa)). Residues 143–153 (GADKQQKNPQL) are flexible linker. The tract at residues 153–199 (LEDALEALRALGYVEKELKKVEKQLKAETLETDEYIRRALALMLKRP) is domain III.

The protein belongs to the RuvA family. In terms of assembly, homotetramer. Forms an RuvA(8)-RuvB(12)-Holliday junction (HJ) complex. HJ DNA is sandwiched between 2 RuvA tetramers; dsDNA enters through RuvA and exits via RuvB. An RuvB hexamer assembles on each DNA strand where it exits the tetramer. Each RuvB hexamer is contacted by two RuvA subunits (via domain III) on 2 adjacent RuvB subunits; this complex drives branch migration. In the full resolvosome a probable DNA-RuvA(4)-RuvB(12)-RuvC(2) complex forms which resolves the HJ.

The protein localises to the cytoplasm. Functionally, the RuvA-RuvB-RuvC complex processes Holliday junction (HJ) DNA during genetic recombination and DNA repair, while the RuvA-RuvB complex plays an important role in the rescue of blocked DNA replication forks via replication fork reversal (RFR). RuvA specifically binds to HJ cruciform DNA, conferring on it an open structure. The RuvB hexamer acts as an ATP-dependent pump, pulling dsDNA into and through the RuvAB complex. HJ branch migration allows RuvC to scan DNA until it finds its consensus sequence, where it cleaves and resolves the cruciform DNA. The sequence is that of Holliday junction branch migration complex subunit RuvA from Shouchella clausii (strain KSM-K16) (Alkalihalobacillus clausii).